The following is a 193-amino-acid chain: Small ribosomal subunit protein eS1 (193 aa).

It belongs to the eukaryotic ribosomal protein eS1 family.

This is Small ribosomal subunit protein eS1 from Methanobrevibacter smithii (strain ATCC 35061 / DSM 861 / OCM 144 / PS).